The primary structure comprises 147 residues: DNA-directed RNA polymerase RPB6 homolog (147 aa).

Belongs to the archaeal RpoK/eukaryotic RPB6 RNA polymerase subunit family. As to quaternary structure, part of the viral DNA-directed RNA polymerase that consists of 8 polII-like subunits (RPB1, RPB2, RPB3, RPB5, RPB6, RPB7, RPB9, RPB10), a capping enzyme and a termination factor.

Its subcellular location is the host cytoplasm. It is found in the virion. Its function is as follows. Component of the DNA-directed RNA polymerase (RNAP) that catalyzes the transcription in the cytoplasm of viral DNA into RNA using the four ribonucleoside triphosphates as substrates. This is DNA-directed RNA polymerase RPB6 homolog from Ornithodoros (relapsing fever ticks).